The primary structure comprises 344 residues: HTH-type transcriptional regulator XC_2801 (344 aa).

An HTH lysR-type domain is found at 3–60 (HDLNDTLIFVKVVEQGSFIAAANSLGLPKTTVSRKVQELETRLGARLLHRTTRRIGLT). Residues 20-39 (FIAAANSLGLPKTTVSRKVQ) constitute a DNA-binding region (H-T-H motif).

The protein belongs to the LysR transcriptional regulatory family. In terms of assembly, interacts with the cyclic di-GMP effector XC_3703.

Its activity is regulated as follows. Activity is regulated by cyclic di-GMP. Cyclic di-GMP specifically binds to XC_3703, which inhibits the interaction of the XC_2801-XC_3703 complex with DNA and prevents the transcription of the target genes. In terms of biological role, transcriptional regulator that directly or indirectly regulates the expression of virulence-related genes, including flhB, aaeA, fliL and flgG. Binds to the promoter of the target genes only in the presence of XC_3703. This Xanthomonas campestris pv. campestris (strain 8004) protein is HTH-type transcriptional regulator XC_2801.